The sequence spans 156 residues: Small ribosomal subunit protein uS7 (156 aa).

The protein belongs to the universal ribosomal protein uS7 family. In terms of assembly, part of the 30S ribosomal subunit. Contacts proteins S9 and S11.

Functionally, one of the primary rRNA binding proteins, it binds directly to 16S rRNA where it nucleates assembly of the head domain of the 30S subunit. Is located at the subunit interface close to the decoding center, probably blocks exit of the E-site tRNA. This chain is Small ribosomal subunit protein uS7, found in Carsonella ruddii (strain PV).